A 314-amino-acid polypeptide reads, in one-letter code: uncharacterized protein (314 aa).

The signal sequence occupies residues 1–18; the sequence is MKVSLLIFLIILVGVIKS. Residues Asn-43, Asn-96, Asn-109, Asn-116, Asn-117, and Asn-161 are each glycosylated (N-linked (GlcNAc...) asparagine). The segment at 252–314 is disordered; the sequence is SMRITKNNPH…PKSIDFHHLF (63 aa). Low complexity-rich tracts occupy residues 257–268 and 285–296; these read KNNPHLNNNNNN and KTTTKTSTKTTS.

Its subcellular location is the secreted. This is an uncharacterized protein from Dictyostelium discoideum (Social amoeba).